The primary structure comprises 461 residues: UDP-glycosyltransferase 82A1 (461 aa).

UDP-alpha-D-glucose contacts are provided by residues S292, 349–351, 366–374, and 388–391; these read APQ, HCGWNSTME, and AGDQ.

Belongs to the UDP-glycosyltransferase family.

This chain is UDP-glycosyltransferase 82A1 (UGT82A1), found in Arabidopsis thaliana (Mouse-ear cress).